Here is a 207-residue protein sequence, read N- to C-terminus: MNMFRQAVRSFVRYQSTTSLNPKILPFNAKETPIPKCVEAVYHAPLKIEPTHRDLIADIQLRSYDNENLDFFSSFVLRAGYYLGIPMKGPKPLPTKRKRWTVIRAPFVMAKSKENFERHTHARLIRLYDCNTELVETLLSYISKHGISGVGIKCNLYQREPIDLDSKKDGPELENIDISSQLQGLDDVVGAKVVELLNNPEFKKHLQ.

The transit peptide at 1–14 (MNMFRQAVRSFVRY) directs the protein to the mitochondrion.

This sequence belongs to the universal ribosomal protein uS10 family. In terms of assembly, part of the mitochondrial small ribosomal subunit.

It is found in the mitochondrion. Involved in mitochondrial genome encoded proteins translation. Involved in the binding of tRNA to the ribosomes. The protein is Small ribosomal subunit protein uS10m (RSM10) of Kluyveromyces lactis (strain ATCC 8585 / CBS 2359 / DSM 70799 / NBRC 1267 / NRRL Y-1140 / WM37) (Yeast).